Consider the following 331-residue polypeptide: Ribosomal RNA small subunit methyltransferase H (331 aa).

Residues 38–40, Asp56, Phe83, Asp100, and Gln107 each bind S-adenosyl-L-methionine; that span reads GGY. A disordered region spans residues 289-331; the sequence is AELAENPRARSARLRVGVRTDAPAGKVDPQALGTPLIPKKGRR.

The protein belongs to the methyltransferase superfamily. RsmH family.

It is found in the cytoplasm. The catalysed reaction is cytidine(1402) in 16S rRNA + S-adenosyl-L-methionine = N(4)-methylcytidine(1402) in 16S rRNA + S-adenosyl-L-homocysteine + H(+). Specifically methylates the N4 position of cytidine in position 1402 (C1402) of 16S rRNA. The sequence is that of Ribosomal RNA small subunit methyltransferase H from Cereibacter sphaeroides (strain ATCC 17029 / ATH 2.4.9) (Rhodobacter sphaeroides).